Consider the following 204-residue polypeptide: ATP phosphoribosyltransferase (204 aa).

This sequence belongs to the ATP phosphoribosyltransferase family. Short subfamily.

It is found in the cytoplasm. The catalysed reaction is 1-(5-phospho-beta-D-ribosyl)-ATP + diphosphate = 5-phospho-alpha-D-ribose 1-diphosphate + ATP. It participates in amino-acid biosynthesis; L-histidine biosynthesis; L-histidine from 5-phospho-alpha-D-ribose 1-diphosphate: step 1/9. Catalyzes the condensation of ATP and 5-phosphoribose 1-diphosphate to form N'-(5'-phosphoribosyl)-ATP (PR-ATP). Has a crucial role in the pathway because the rate of histidine biosynthesis seems to be controlled primarily by regulation of HisG enzymatic activity. The protein is ATP phosphoribosyltransferase (hisG) of Pyrococcus furiosus (strain ATCC 43587 / DSM 3638 / JCM 8422 / Vc1).